The primary structure comprises 234 residues: Large ribosomal subunit protein uL1 (234 aa).

The protein belongs to the universal ribosomal protein uL1 family. Part of the 50S ribosomal subunit.

Functionally, binds directly to 23S rRNA. The L1 stalk is quite mobile in the ribosome, and is involved in E site tRNA release. Protein L1 is also a translational repressor protein, it controls the translation of the L11 operon by binding to its mRNA. The polypeptide is Large ribosomal subunit protein uL1 (Bartonella tribocorum (strain CIP 105476 / IBS 506)).